The primary structure comprises 370 residues: Lipoyl synthase, mitochondrial (370 aa).

Residues Cys100, Cys105, Cys111, Cys131, Cys135, Cys138, and Ser346 each contribute to the [4Fe-4S] cluster site. The Radical SAM core domain maps to 116-335 (DKSRATATIM…KEVAEKLGFL (220 aa)).

This sequence belongs to the radical SAM superfamily. Lipoyl synthase family. [4Fe-4S] cluster is required as a cofactor.

It localises to the mitochondrion. The enzyme catalyses [[Fe-S] cluster scaffold protein carrying a second [4Fe-4S](2+) cluster] + N(6)-octanoyl-L-lysyl-[protein] + 2 oxidized [2Fe-2S]-[ferredoxin] + 2 S-adenosyl-L-methionine + 4 H(+) = [[Fe-S] cluster scaffold protein] + N(6)-[(R)-dihydrolipoyl]-L-lysyl-[protein] + 4 Fe(3+) + 2 hydrogen sulfide + 2 5'-deoxyadenosine + 2 L-methionine + 2 reduced [2Fe-2S]-[ferredoxin]. Its pathway is protein modification; protein lipoylation via endogenous pathway; protein N(6)-(lipoyl)lysine from octanoyl-[acyl-carrier-protein]: step 2/2. Catalyzes the radical-mediated insertion of two sulfur atoms into the C-6 and C-8 positions of the octanoyl moiety bound to the lipoyl domains of lipoate-dependent enzymes, thereby converting the octanoylated domains into lipoylated derivatives. The sequence is that of Lipoyl synthase, mitochondrial (lip5) from Schizosaccharomyces pombe (strain 972 / ATCC 24843) (Fission yeast).